Consider the following 464-residue polypeptide: Phospho-2-dehydro-3-deoxyheptonate aldolase AroG (464 aa).

Mn(2+) is bound at residue cysteine 87. Phosphoenolpyruvate-binding positions include arginine 126, 285-286 (ER), lysine 308, and arginine 339. Residues histidine 371, glutamate 413, and aspartate 443 each coordinate Mn(2+).

It belongs to the class-II DAHP synthase family. Homodimer. Probably interacts with MSMEG_5536. Mn(2+) serves as cofactor. The cofactor is Co(2+). Requires Cd(2+) as cofactor.

It catalyses the reaction D-erythrose 4-phosphate + phosphoenolpyruvate + H2O = 7-phospho-2-dehydro-3-deoxy-D-arabino-heptonate + phosphate. It functions in the pathway metabolic intermediate biosynthesis; chorismate biosynthesis; chorismate from D-erythrose 4-phosphate and phosphoenolpyruvate: step 1/7. In terms of biological role, catalyzes an aldol-like condensation reaction between phosphoenolpyruvate (PEP) and D-erythrose 4-phosphate (E4P) to generate 3-deoxy-D-arabino-heptulosonate 7-phosphate (DAH7P) and inorganic phosphate. The protein is Phospho-2-dehydro-3-deoxyheptonate aldolase AroG (aroG) of Mycolicibacterium smegmatis (strain ATCC 700084 / mc(2)155) (Mycobacterium smegmatis).